We begin with the raw amino-acid sequence, 254 residues long: Small ribosomal subunit protein uS2 (254 aa).

This sequence belongs to the universal ribosomal protein uS2 family.

This chain is Small ribosomal subunit protein uS2, found in Borrelia hermsii (strain HS1 / DAH).